The primary structure comprises 77 residues: Translational regulator CsrA (77 aa).

Belongs to the CsrA/RsmA family. In terms of assembly, homodimer; the beta-strands of each monomer intercalate to form a hydrophobic core, while the alpha-helices form wings that extend away from the core.

It localises to the cytoplasm. Functionally, a translational regulator that binds mRNA to regulate translation initiation and/or mRNA stability. Usually binds in the 5'-UTR at or near the Shine-Dalgarno sequence preventing ribosome-binding, thus repressing translation. Its main target seems to be the major flagellin gene, while its function is anatagonized by FliW. This chain is Translational regulator CsrA, found in Pseudarthrobacter chlorophenolicus (strain ATCC 700700 / DSM 12829 / CIP 107037 / JCM 12360 / KCTC 9906 / NCIMB 13794 / A6) (Arthrobacter chlorophenolicus).